We begin with the raw amino-acid sequence, 326 residues long: JNK1/MAPK8-associated membrane protein homolog (326 aa).

Topologically, residues 1 to 71 (MSSLSGHAST…CESCDTPLQP (71 aa)) are lumenal. An N-linked (GlcNAc...) asparagine glycan is attached at asparagine 27. Residues 72-92 (YDWMYLLFIALLPLLLHMQFI) traverse the membrane as a helical segment. Residues 93–108 (RIARKYCRTRYYEVSE) are Cytoplasmic-facing. Residues 109-129 (YLCVILENVIACVIAVLIYPP) form a helical membrane-spanning segment. Over 130 to 166 (RFTFFLNGCSKTDIKEWYPACYNPRIGYTKTMRCTYE) the chain is Lumenal. Residues 167–187 (VVFPLYSITFIHHLILIGSIL) form a helical membrane-spanning segment. Over 188–208 (VLRSTLYCVLLYKTYNGKPFY) the chain is Cytoplasmic. A run of 2 helical transmembrane segments spans residues 209-229 (AAIV…GVVF) and 230-250 (YTFP…HLAL). At 251–269 (EGKRPLKEMIVRIATSPTH) the chain is on the cytoplasmic side. The helical transmembrane segment at 270 to 290 (LIFLSITMLMLSFGVIAIIAP) threads the bilayer. Over 291–296 (LDIPYR) the chain is Lumenal. Residues 297-317 (WSFLCIVPVPFIFYMATIPFS) form a helical membrane-spanning segment. Topologically, residues 318–326 (NPTTTMRLS) are cytoplasmic.

Its subcellular location is the endoplasmic reticulum membrane. Facilitates degradation of misfolded endoplasmic reticulum (ER) proteins through the recruitment of components of the proteasome and endoplasmic reticulum-associated degradation (ERAD) system. Involved in ER stress response. This Caenorhabditis elegans protein is JNK1/MAPK8-associated membrane protein homolog.